The sequence spans 216 residues: Guanylate kinase (216 aa).

A Guanylate kinase-like domain is found at 12–191; that stretch reads GLLFVISSPS…CVKQVKNILT (180 aa). Residue 19-26 participates in ATP binding; that stretch reads SPSGAGKS.

It belongs to the guanylate kinase family.

The protein localises to the cytoplasm. It carries out the reaction GMP + ATP = GDP + ADP. In terms of biological role, essential for recycling GMP and indirectly, cGMP. The protein is Guanylate kinase of Zymomonas mobilis subsp. mobilis (strain ATCC 31821 / ZM4 / CP4).